Consider the following 249-residue polypeptide: Probable transcriptional regulatory protein Sfum_0996 (249 aa).

Belongs to the TACO1 family.

The protein resides in the cytoplasm. This is Probable transcriptional regulatory protein Sfum_0996 from Syntrophobacter fumaroxidans (strain DSM 10017 / MPOB).